A 169-amino-acid polypeptide reads, in one-letter code: MADESPKSIYDFTVKDIGGNDVSLDQYKGKTLLVVNVASKCGLTDANYKELNVLYEKYKEQGLEILAFPCNQFLGQEPGNNEEIQQTVCTRFKAEFPIFDKVDVNGKNTAPLYKYLKAEKGGLLIDAIKWNFTKFLVSPDGKVLQRYSPRTSPLQFEKDIQTALGQASS.

Residue C41 is part of the active site.

The protein belongs to the glutathione peroxidase family. As to quaternary structure, interacts with DJ1A. In terms of tissue distribution, expressed in leaves, stems, flowers, green siliques and roots.

It localises to the cytoplasm. Its subcellular location is the cytosol. The protein localises to the nucleus. It carries out the reaction 2 glutathione + H2O2 = glutathione disulfide + 2 H2O. Functionally, may constitute a glutathione peroxidase-like protective system against oxidative stresses. The chain is Probable glutathione peroxidase 2 (GPX2) from Arabidopsis thaliana (Mouse-ear cress).